We begin with the raw amino-acid sequence, 567 residues long: Protein ESMERALDA 1 (567 aa).

The segment at Met-1–Pro-41 is disordered. Topologically, residues Met-1–Gln-65 are cytoplasmic. Residues Arg-23–Ser-32 show a composition bias toward basic residues. The chain crosses the membrane as a helical; Signal-anchor for type II membrane protein span at residues Gly-66–Val-86. The Lumenal segment spans residues Ser-87–Thr-567. Residues Asn-121, Asn-145, Asn-184, and Asn-238 are each glycosylated (N-linked (GlcNAc...) asparagine). Substrate is bound at residue His-331–Arg-333. Asn-403, Asn-419, Asn-449, Asn-538, and Asn-554 each carry an N-linked (GlcNAc...) asparagine glycan.

The protein belongs to the glycosyltransferase GT106 family. As to expression, ubiquitous.

The protein resides in the golgi apparatus membrane. Its pathway is protein modification; protein glycosylation. Its function is as follows. Glycosyltransferase that plays a role in cell adhesion. This is Protein ESMERALDA 1 from Arabidopsis thaliana (Mouse-ear cress).